Reading from the N-terminus, the 114-residue chain is RutC family protein YoaB (114 aa).

Belongs to the RutC family.

This Escherichia coli O6:H1 (strain CFT073 / ATCC 700928 / UPEC) protein is RutC family protein YoaB (yoaB).